A 700-amino-acid chain; its full sequence is Calpain-2 catalytic subunit (700 aa).

Ala2 carries the post-translational modification N-acetylalanine. A propeptide spans 2–19 (AGIAAKLVKDREAAEGLG) (anchors to the small subunit). The region spanning 45–344 (LFQDPSFPAI…YSRLEICNLT (300 aa)) is the Calpain catalytic domain. Ca(2+)-binding residues include Ile89, Gly91, and Asp96. The active site involves Cys105. Glu175, Gln229, and Lys230 together coordinate Ca(2+). Catalysis depends on residues His262 and Asn286. Residues Glu292, Asp299, and Glu323 each contribute to the Ca(2+) site. The domain III stretch occupies residues 345–514 (PDTLTSDTYK…KKADYQAVDD (170 aa)). The segment at 515-529 (EIEANLEEFDISEDD) is linker. The tract at residues 530 to 700 (IDDGFRRLFA…LISWLCFSVL (171 aa)) is domain IV. Residues Ala542, Asp545, Glu547, Glu552, Asp585, Asp587, Ser589, Lys591, Glu596, Asp615, Asp617, Ser619, Thr621, Glu626, Asp658, and Asn661 each coordinate Ca(2+). 2 EF-hand domains span residues 572-605 (FSIETCKIMVDMLDSDGSGKLGLKEFYILWTKIQ) and 602-637 (TKIQKYQKIYREIDVDRSGTMNSYEMRKALEEAGFK). The EF-hand 3 domain occupies 667-700 (VRLETLFKIFKQLDPENTGTIELDLISWLCFSVL).

Belongs to the peptidase C2 family. As to quaternary structure, forms a heterodimer with a small (regulatory) subunit (CAPNS1). Interacts with CPEB3; this leads to cleavage of CPEB3. The cofactor is Ca(2+).

It is found in the cytoplasm. The protein localises to the cell membrane. The enzyme catalyses Broad endopeptidase specificity.. With respect to regulation, activated by 200-1000 micromolar concentrations of calcium and inhibited by calpastatin. In terms of biological role, calcium-regulated non-lysosomal thiol-protease which catalyzes limited proteolysis of substrates involved in cytoskeletal remodeling and signal transduction. Proteolytically cleaves MYOC at 'Arg-226'. Proteolytically cleaves CPEB3 following neuronal stimulation which abolishes CPEB3 translational repressor activity, leading to translation of CPEB3 target mRNAs. The sequence is that of Calpain-2 catalytic subunit (CAPN2) from Macaca fascicularis (Crab-eating macaque).